Reading from the N-terminus, the 728-residue chain is Beta-galactosidase 12 (728 aa).

The signal sequence occupies residues 1-27; the sequence is MGLNFREKAWILLGILCCSSLICSVKA. Glu185 functions as the Proton donor in the catalytic mechanism. Residue Glu254 is the Nucleophile of the active site. N-linked (GlcNAc...) asparagine glycans are attached at residues Asn255, Asn380, and Asn450.

Belongs to the glycosyl hydrolase 35 family. As to expression, ubiquitous, with higher expression levels in roots and siliques.

It localises to the secreted. The protein localises to the extracellular space. The protein resides in the apoplast. It carries out the reaction Hydrolysis of terminal non-reducing beta-D-galactose residues in beta-D-galactosides.. In Arabidopsis thaliana (Mouse-ear cress), this protein is Beta-galactosidase 12 (BGAL12).